Here is an 89-residue protein sequence, read N- to C-terminus: Small ribosomal subunit protein uS15 (89 aa).

Belongs to the universal ribosomal protein uS15 family. In terms of assembly, part of the 30S ribosomal subunit. Forms a bridge to the 50S subunit in the 70S ribosome, contacting the 23S rRNA.

In terms of biological role, one of the primary rRNA binding proteins, it binds directly to 16S rRNA where it helps nucleate assembly of the platform of the 30S subunit by binding and bridging several RNA helices of the 16S rRNA. Its function is as follows. Forms an intersubunit bridge (bridge B4) with the 23S rRNA of the 50S subunit in the ribosome. This is Small ribosomal subunit protein uS15 from Rhizobium etli (strain CIAT 652).